We begin with the raw amino-acid sequence, 436 residues long: EPS I polysaccharide export inner membrane protein EpsE (436 aa).

A run of 12 helical transmembrane segments spans residues 20–40, 49–69, 91–111, 132–152, 160–180, 184–204, 234–254, 261–281, 307–327, 341–361, 375–395, and 396–416; these read VLGL…NIML, FGLF…LATG, LCAF…ALYL, MAAI…FLYA, ASVS…MGPI, VVAL…QLVI, VLTT…LAAM, LALF…PATL, ALLF…LLAG, AAAS…SVLL, FAMA…ALRL, and GYGA…LILF.

The protein to E.coli bicyclomycin resistance protein (BCR).

It is found in the cell inner membrane. Probably involved in polymerization and/or export of exopolysaccharide EPS I which functions as a virulence factor. May play a role in export of EPS I or its intermediates across the membranes. The protein is EPS I polysaccharide export inner membrane protein EpsE (epsE) of Ralstonia nicotianae (strain ATCC BAA-1114 / GMI1000) (Ralstonia solanacearum).